The primary structure comprises 275 residues: Anamorsin homolog (275 aa).

An N-terminal SAM-like domain region spans residues 1–147; the sequence is MTSASIHIGS…QSASSAAATG (147 aa). The linker stretch occupies residues 148–183; it reads RINLGGAKTKVKLSLDDDDDDQLIDEDDLLNGGGGM. Residues Cys-203, Cys-209, Cys-212, and Cys-214 each coordinate [2Fe-2S] cluster. The interval 203-214 is fe-S binding site A; sequence CGGRKACDNCTC. Residues Cys-238, Cys-241, Cys-249, and Cys-252 each coordinate [4Fe-4S] cluster. 2 consecutive short sequence motifs (cx2C motif) follow at residues 238 to 241 and 249 to 252; these read CGNC and CAGC. Positions 238 to 252 are fe-S binding site B; that stretch reads CGNCAKGDAFRCAGC.

This sequence belongs to the anamorsin family. As to quaternary structure, monomer. [2Fe-2S] cluster serves as cofactor. It depends on [4Fe-4S] cluster as a cofactor.

Its subcellular location is the cytoplasm. The protein localises to the mitochondrion intermembrane space. Its function is as follows. Component of the cytosolic iron-sulfur (Fe-S) protein assembly (CIA) machinery. Required for the maturation of extramitochondrial Fe-S proteins. Part of an electron transfer chain functioning in an early step of cytosolic Fe-S biogenesis, facilitating the de novo assembly of a [4Fe-4S] cluster on the cytosolic Fe-S scaffold complex. Electrons are transferred from NADPH via a FAD- and FMN-containing diflavin oxidoreductase. Together with the diflavin oxidoreductase, also required for the assembly of the diferric tyrosyl radical cofactor of ribonucleotide reductase (RNR), probably by providing electrons for reduction during radical cofactor maturation in the catalytic small subunit. The sequence is that of Anamorsin homolog from Thalassiosira pseudonana (Marine diatom).